A 1254-amino-acid polypeptide reads, in one-letter code: Zinc finger protein BRUTUS (1254 aa).

Residues 1-40 (MATPLPDFETARGGGAVASSSTTVLPSSVSSSSSSSRPLP) are disordered. Residues 19-40 (SSSTTVLPSSVSSSSSSSRPLP) are compositionally biased toward low complexity. The chain crosses the membrane as a helical span at residues 201–221 (FLCSIPVNMLAVFLPWISSSI). The segment at 893–913 (GSPDSSSTETSKPSPQKDNDH) is disordered. The span at 895–906 (PDSSSTETSKPS) shows a compositional bias: polar residues. The segment at 999 to 1068 (PEKQIYGCEH…PICTTPSCDG (70 aa)) adopts a CHY-type zinc-finger fold. Positions 1006, 1008, 1019, 1020, 1026, 1029, 1030, 1036, 1048, 1051, 1061, 1066, 1076, 1079, 1090, 1091, 1094, 1097, 1109, 1110, 1113, 1116, 1124, and 1126 each coordinate Zn(2+). The CTCHY-type zinc finger occupies 1071–1134 (MAKHYCSICK…KCLEKSLETN (64 aa)). The segment at 1135 to 1176 (CPICCEFLFTSSEAVRALPCGHYMHSACFQAYTCSHYTCPIC) adopts an RING-type; atypical zinc-finger fold.

As to quaternary structure, interacts with the PYEL proteins bHLH115, bHLH104 and ILR3 in the nucleus. Binds zinc and iron ions. Expressed in cotyledons of seedlings, young leaves, developing and mature embryos, and other reproductive tissues including floral vasculature, funiculus, septum, and gynoecium valves.

The protein resides in the membrane. It localises to the nucleus. Its pathway is protein modification; protein ubiquitination. In terms of biological role, essential protein. Negatively regulates the response to iron deficiency and thus contributes to iron homeostasis. Exhibits E3 ubiquitin-protein ligase activity in vitro. Plays a role in root growth, rhizosphere acidification, and iron reductase activity in response to iron deprivation. Facilitates 26S proteasome-mediated degradation of PYEL proteins in the absence of iron. This Arabidopsis thaliana (Mouse-ear cress) protein is Zinc finger protein BRUTUS.